Reading from the N-terminus, the 455-residue chain is Ribosome biogenesis protein NOP53 (455 aa).

Polar residues predominate over residues 1–15 (MAPTNLTKKPSQYKQ). The interval 1 to 25 (MAPTNLTKKPSQYKQSSRKGKKAWR) is disordered. Over residues 16-25 (SSRKGKKAWR) the composition is skewed to basic residues. Residue S31 is modified to Phosphoserine. Residues 264-333 (HLMETLDDNE…RNKAKRHEEK (70 aa)) form a disordered region. A compositionally biased stretch (acidic residues) spans 268–294 (TLDDNEEEESSSNEEEEEEEEENENEN). A compositionally biased stretch (basic residues) spans 314–328 (VKNKKKTKYQRNKAK).

This sequence belongs to the NOP53 family. In terms of assembly, interacts with CBF5, FPR3, FPR4, NOP2, PIH1, RRN3, RRP6 and PAP2. Interacts with pre-60S ribosomal particles.

The protein localises to the nucleus. Its subcellular location is the nucleolus. The protein resides in the nucleoplasm. Its function is as follows. Late-acting factor in the nuclear maturation of 60S ribosomal subunits, which is required for normal acquisition of export competence. Required for the export of the large subunit. Acts to stimulate the RNase activity of the exosome complex, and may recruit the exosome to 7S pre-rRNA for processing. Associates with numerous RNAs including the 27S and 7S pre-rRNAs and the box H/ACA snoRNA snR37. Also interacts (via N-terminal region) with the mature 25S rRNA and the mature 5.8S rRNA. This is Ribosome biogenesis protein NOP53 from Saccharomyces cerevisiae (strain ATCC 204508 / S288c) (Baker's yeast).